Reading from the N-terminus, the 304-residue chain is WW domain-binding protein 1 (304 aa).

The tract at residues 1 to 26 (MARASSRNSSEEAWGSLQAPQQQQSP) is disordered. 2 consecutive short sequence motifs (PPxY motif) follow at residues 159–162 (PPAY) and 172–176 (PPPPY). Disordered stretches follow at residues 206 to 235 (TNVE…VHIP) and 252 to 304 (CPCP…GDIP). Residues 209–218 (EGVSSQQSAL) show a composition bias toward polar residues.

As to quaternary structure, binds to the WW domain of YAP1, WWP1 and WWP2. Interacts with WWOX. Interacts with NEDD4.

This chain is WW domain-binding protein 1 (Wbp1), found in Mus musculus (Mouse).